Consider the following 62-residue polypeptide: Translational regulator CsrA (62 aa).

The protein belongs to the CsrA/RsmA family. As to quaternary structure, homodimer; the beta-strands of each monomer intercalate to form a hydrophobic core, while the alpha-helices form wings that extend away from the core.

Its subcellular location is the cytoplasm. Functionally, a key translational regulator that binds mRNA to regulate translation initiation and/or mRNA stability. Mediates global changes in gene expression, shifting from rapid growth to stress survival by linking envelope stress, the stringent response and the catabolite repression systems. Usually binds in the 5'-UTR; binding at or near the Shine-Dalgarno sequence prevents ribosome-binding, repressing translation, binding elsewhere in the 5'-UTR can activate translation and/or stabilize the mRNA. Its function is antagonized by small RNA(s). The chain is Translational regulator CsrA from Pasteurella multocida (strain Pm70).